The sequence spans 394 residues: 8-amino-7-oxononanoate synthase (394 aa).

Substrate is bound at residue Arg-21. Position 112–113 (112–113 (GY)) interacts with pyridoxal 5'-phosphate. His-137 provides a ligand contact to substrate. Pyridoxal 5'-phosphate contacts are provided by Ser-183, His-211, and Thr-239. The residue at position 242 (Lys-242) is an N6-(pyridoxal phosphate)lysine. Thr-358 provides a ligand contact to substrate.

Belongs to the class-II pyridoxal-phosphate-dependent aminotransferase family. BioF subfamily. Homodimer. It depends on pyridoxal 5'-phosphate as a cofactor.

It catalyses the reaction 6-carboxyhexanoyl-[ACP] + L-alanine + H(+) = (8S)-8-amino-7-oxononanoate + holo-[ACP] + CO2. It participates in cofactor biosynthesis; biotin biosynthesis. In terms of biological role, catalyzes the decarboxylative condensation of pimeloyl-[acyl-carrier protein] and L-alanine to produce 8-amino-7-oxononanoate (AON), [acyl-carrier protein], and carbon dioxide. The chain is 8-amino-7-oxononanoate synthase from Burkholderia pseudomallei (strain 1710b).